A 108-amino-acid chain; its full sequence is NADH dehydrogenase [ubiquinone] 1 alpha subcomplex subunit 8-A (108 aa).

CHCH domains lie at 28–69 and 70–108; these read GIRC…LKDL and HQRCPKEMDAYVGCMYYYTNEFELCRKEQEAFEKVCPLK. 3 short sequence motifs (cx9C motif) span residues 31–41, 51–61, and 73–83; these read CMPENMAFLKC, CLEKGRDVTRC, and CPKEMDAYVGC. Disulfide bonds link cysteine 31–cysteine 61, cysteine 41–cysteine 51, cysteine 73–cysteine 105, and cysteine 83–cysteine 94. The short motif at 94 to 105 is the Cx10C motif element; that stretch reads CRKEQEAFEKVC.

This sequence belongs to the complex I NDUFA8 subunit family. Complex I is composed of at least 49 different subunits.

Its subcellular location is the mitochondrion. It localises to the mitochondrion intermembrane space. Its function is as follows. Accessory subunit of the mitochondrial membrane respiratory chain NADH dehydrogenase (Complex I), that is believed not to be involved in catalysis. Complex I functions in the transfer of electrons from NADH to the respiratory chain. The immediate electron acceptor for the enzyme is believed to be ubiquinone. This is NADH dehydrogenase [ubiquinone] 1 alpha subcomplex subunit 8-A from Arabidopsis thaliana (Mouse-ear cress).